We begin with the raw amino-acid sequence, 179 residues long: Laminin-binding fimbrial subunit ElfA (179 aa).

The N-terminal stretch at 1 to 21 is a signal peptide; sequence MKKSVLTAFITVVCATSSVMA.

The protein belongs to the fimbrial protein family.

The protein resides in the fimbrium. In terms of biological role, part of the elfADCG fimbrial operon, which could be required for adherence to host epithelial cells. ElfA is an accessory colonization factor that contributes to adherence of bacteria to human intestinal epithelial cells and to animal intestinal tissue in vitro. Binds specifically to laminin, but not to fibronectin or collagen type IV. The polypeptide is Laminin-binding fimbrial subunit ElfA (elfA) (Escherichia coli O157:H7).